The sequence spans 60 residues: Large ribosomal subunit protein bL32 (60 aa).

Residues 1 to 60 (MAVQQNKKSPSKRGMHRSHDFLVNPSTAIEPTTGETHLRHHISPNGFYRGRKVLKTKADE) are disordered. Over residues 24-35 (NPSTAIEPTTGE) the composition is skewed to polar residues. The segment covering 49–60 (RGRKVLKTKADE) has biased composition (basic residues).

The protein belongs to the bacterial ribosomal protein bL32 family.

In Bordetella petrii (strain ATCC BAA-461 / DSM 12804 / CCUG 43448), this protein is Large ribosomal subunit protein bL32.